The following is a 250-amino-acid chain: Pyrroloquinoline-quinone synthase (250 aa).

The protein belongs to the PqqC family.

It carries out the reaction 6-(2-amino-2-carboxyethyl)-7,8-dioxo-1,2,3,4,7,8-hexahydroquinoline-2,4-dicarboxylate + 3 O2 = pyrroloquinoline quinone + 2 H2O2 + 2 H2O + H(+). The protein operates within cofactor biosynthesis; pyrroloquinoline quinone biosynthesis. In terms of biological role, ring cyclization and eight-electron oxidation of 3a-(2-amino-2-carboxyethyl)-4,5-dioxo-4,5,6,7,8,9-hexahydroquinoline-7,9-dicarboxylic-acid to PQQ. The protein is Pyrroloquinoline-quinone synthase of Pseudomonas aeruginosa (strain LESB58).